The following is a 309-amino-acid chain: Nucleotide-binding protein cgR_1639 (309 aa).

Gly32–Ser39 contacts ATP. Residue Asp83–Ser86 participates in GTP binding.

Belongs to the RapZ-like family.

In terms of biological role, displays ATPase and GTPase activities. This chain is Nucleotide-binding protein cgR_1639, found in Corynebacterium glutamicum (strain R).